The sequence spans 346 residues: UPF0324 membrane protein FN0533 (346 aa).

The next 10 membrane-spanning stretches (helical) occupy residues 5–22 (LYGI…WKLG), 27–49 (LVGG…KNRA), 62–81 (VLQY…TIIS), 86–108 (SLPI…AKLI), 115–137 (VILI…APVI), 147–169 (AISV…GDIL), 216–233 (LTRT…AVYN), 248–270 (IFPM…NYFI), 283–305 (INNV…MVAI), and 315–337 (ILSG…LVSI).

The protein belongs to the UPF0324 family.

It localises to the cell membrane. In Fusobacterium nucleatum subsp. nucleatum (strain ATCC 25586 / DSM 15643 / BCRC 10681 / CIP 101130 / JCM 8532 / KCTC 2640 / LMG 13131 / VPI 4355), this protein is UPF0324 membrane protein FN0533.